Reading from the N-terminus, the 416-residue chain is Gamma-glutamyl phosphate reductase (416 aa).

This sequence belongs to the gamma-glutamyl phosphate reductase family.

It is found in the cytoplasm. It carries out the reaction L-glutamate 5-semialdehyde + phosphate + NADP(+) = L-glutamyl 5-phosphate + NADPH + H(+). Its pathway is amino-acid biosynthesis; L-proline biosynthesis; L-glutamate 5-semialdehyde from L-glutamate: step 2/2. Its function is as follows. Catalyzes the NADPH-dependent reduction of L-glutamate 5-phosphate into L-glutamate 5-semialdehyde and phosphate. The product spontaneously undergoes cyclization to form 1-pyrroline-5-carboxylate. The chain is Gamma-glutamyl phosphate reductase from Vibrio cholerae serotype O1 (strain ATCC 39541 / Classical Ogawa 395 / O395).